An 86-amino-acid polypeptide reads, in one-letter code: Neurotoxin 3FTx-8a (86 aa).

A signal peptide spans Met1–Thr21. Disulfide bonds link Cys24-Cys45, Cys27-Cys32, Cys38-Cys63, Cys67-Cys78, and Cys79-Cys84.

In terms of tissue distribution, expressed by the venom gland.

It is found in the secreted. In terms of biological role, binds with low affinity to muscular (alpha-1-beta-1-delta-epsilon/CHRNA1-CHRNB1-CHRND-CHRNE) and very low affinity to neuronal (alpha-7/CHRNA7) nicotinic acetylcholine receptor (nAChR). The chain is Neurotoxin 3FTx-8a from Bungarus fasciatus (Banded krait).